The sequence spans 140 residues: Large ribosomal subunit protein bL17 (140 aa).

It belongs to the bacterial ribosomal protein bL17 family. Part of the 50S ribosomal subunit. Contacts protein L32.

This chain is Large ribosomal subunit protein bL17, found in Gluconobacter oxydans (strain 621H) (Gluconobacter suboxydans).